The chain runs to 211 residues: Small ribosomal subunit protein uS5 (211 aa).

Positions 1–41 (MPGRERRDGGRSADDNKQNDRNERRGGGRRDDRRNQQQDER) are disordered. Positions 44–107 (YIERVVTINR…EEARKNFFRV (64 aa)) constitute an S5 DRBM domain.

The protein belongs to the universal ribosomal protein uS5 family. Part of the 30S ribosomal subunit. Contacts proteins S4 and S8.

With S4 and S12 plays an important role in translational accuracy. In terms of biological role, located at the back of the 30S subunit body where it stabilizes the conformation of the head with respect to the body. The chain is Small ribosomal subunit protein uS5 from Corynebacterium glutamicum (strain R).